Reading from the N-terminus, the 614-residue chain is Threonine--tRNA ligase (614 aa).

The interval 1–138 (MRILTIHARK…PLSELSKTIR (138 aa)) is editing domain. Catalytic stretches follow at residues 195 to 492 (NRVN…PYIP) and 196 to 492 (RVND…PYIP). Zn(2+)-binding residues include Cys-289, His-340, and His-461.

Belongs to the class-II aminoacyl-tRNA synthetase family. In terms of assembly, homodimer. It depends on Zn(2+) as a cofactor.

It is found in the cytoplasm. The enzyme catalyses tRNA(Thr) + L-threonine + ATP = L-threonyl-tRNA(Thr) + AMP + diphosphate + H(+). Its function is as follows. Catalyzes the attachment of threonine to tRNA(Thr) in a two-step reaction: L-threonine is first activated by ATP to form Thr-AMP and then transferred to the acceptor end of tRNA(Thr). Also edits incorrectly charged L-seryl-tRNA(Thr). The polypeptide is Threonine--tRNA ligase (Staphylothermus marinus (strain ATCC 43588 / DSM 3639 / JCM 9404 / F1)).